Here is an 841-residue protein sequence, read N- to C-terminus: Probable outer membrane usher protein EcpC (841 aa).

The signal sequence occupies residues 1 to 29 (MPLRRFSPGLKAQFAFGMVFLFVQPDASA).

It belongs to the EcpC/MatD family.

Its function is as follows. Part of the ecpRABCDE operon, which encodes the E.coli common pilus (ECP). ECP is found in both commensal and pathogenic strains and plays a dual role in early-stage biofilm development and host cell recognition. This Escherichia coli O18:K1:H7 (strain IHE3034 / ExPEC) protein is Probable outer membrane usher protein EcpC (ecpC).